The sequence spans 474 residues: tRNA-2-methylthio-N(6)-dimethylallyladenosine synthase (474 aa).

Residues 3 to 120 (KKLHIKTWGC…LPEMINHVQG (118 aa)) form the MTTase N-terminal domain. The [4Fe-4S] cluster site is built by cysteine 12, cysteine 49, cysteine 83, cysteine 157, cysteine 161, and cysteine 164. The Radical SAM core domain maps to 143-375 (RAEGPTAFVS…QQRISQQAME (233 aa)). In terms of domain architecture, TRAM spans 378 to 441 (RKMVGTVQRV…ASSLRGILLR (64 aa)).

Belongs to the methylthiotransferase family. MiaB subfamily. In terms of assembly, monomer. Requires [4Fe-4S] cluster as cofactor.

It is found in the cytoplasm. It carries out the reaction N(6)-dimethylallyladenosine(37) in tRNA + (sulfur carrier)-SH + AH2 + 2 S-adenosyl-L-methionine = 2-methylsulfanyl-N(6)-dimethylallyladenosine(37) in tRNA + (sulfur carrier)-H + 5'-deoxyadenosine + L-methionine + A + S-adenosyl-L-homocysteine + 2 H(+). Catalyzes the methylthiolation of N6-(dimethylallyl)adenosine (i(6)A), leading to the formation of 2-methylthio-N6-(dimethylallyl)adenosine (ms(2)i(6)A) at position 37 in tRNAs that read codons beginning with uridine. The polypeptide is tRNA-2-methylthio-N(6)-dimethylallyladenosine synthase (Yersinia pestis bv. Antiqua (strain Angola)).